The following is a 235-amino-acid chain: Dual specificity protein phosphatase 15 (235 aa).

Residue G2 is the site of N-myristoyl glycine attachment. Positions 4–144 constitute a Tyrosine-protein phosphatase domain; the sequence is GMTKVLPGLY…LEEFGWANSQ (141 aa). C88 functions as the Phosphocysteine intermediate in the catalytic mechanism. The segment covering 183-193 has biased composition (low complexity); it reads AASATTASSAA. Residues 183 to 212 form a disordered region; sequence AASATTASSAAEGTLQRLVPRSPRDSHQPL.

This sequence belongs to the protein-tyrosine phosphatase family. Non-receptor class dual specificity subfamily. In terms of tissue distribution, isoform 1 is expressed in testis; predominantly in developing spermatocytes (at protein level). Isoform 2 is highly expressed in testis. Expressed in spinal cord and specifically in oligodendroglial cells. Expressed in embryonic brain cortex; down-regulated in mice with experimental autoimmune encephalomyelitis (EAE).

It is found in the cell membrane. The enzyme catalyses O-phospho-L-tyrosyl-[protein] + H2O = L-tyrosyl-[protein] + phosphate. It catalyses the reaction O-phospho-L-seryl-[protein] + H2O = L-seryl-[protein] + phosphate. The catalysed reaction is O-phospho-L-threonyl-[protein] + H2O = L-threonyl-[protein] + phosphate. Functionally, may dephosphorylate MAPK13, ATF2, ERBB3, PDGFRB and SNX6. May play a role in the regulation of oligodendrocyte differentiation. May play a role in the regulation of myelin formation. Involved in the regulation of Erk1/2 phosphorylation in Schwann cells; the signaling may be linked to the regulation of myelination. The protein is Dual specificity protein phosphatase 15 of Mus musculus (Mouse).